A 657-amino-acid chain; its full sequence is Knob-associated histidine-rich protein (657 aa).

The N-terminal stretch at 1–34 (MKSFKNKNTLRRKKAFPVFTKILLVSFLVWVLKC) is a signal peptide. Residue N42 is glycosylated (N-linked (GlcNAc...) asparagine). Residues 57 to 76 (AQKQHEHHHHHHHHHHHQHQ) show a composition bias toward basic residues. 3 disordered regions span residues 57 to 138 (AQKQ…PSNE), 282 to 301 (AHDG…SEGY), and 352 to 657 (VNKY…GCCG). Residues 99-108 (PQVHQQVHGQ) are compositionally biased toward low complexity. Positions 112 to 123 (HHHHHHHHHHLH) are enriched in basic residues. Basic and acidic residues-rich tracts occupy residues 357–378 (KHGD…EGEK) and 399–408 (KDNEDAESVK). Over residues 409 to 425 (SKKHKSHDCEKKKSKKH) the composition is skewed to basic residues. Positions 426-435 (KDNEDAESVK) are enriched in basic and acidic residues. Residues 453–468 (AAKKLTKKIKIKKKTN) show a composition bias toward basic residues. Over residues 473-496 (DGSKAHEKKENETKNTAGENKKVD) the composition is skewed to basic and acidic residues. Over residues 497-508 (STSADNKSTNAA) the composition is skewed to polar residues. Basic and acidic residues-rich tracts occupy residues 512 to 523 (AKDKTQGGKTDK) and 551 to 578 (STSK…EATK). Over residues 590–614 (ASTTEGATKGASTTAGSTTGATTGA) the composition is skewed to low complexity. Residues 628–643 (AANNGEQVMSRGQAQL) are compositionally biased toward polar residues. Basic residues predominate over residues 648-657 (KKKKKRGCCG).

Its subcellular location is the secreted. Its function is as follows. KAHRP might mimick human histidine-rich glycoproteins to anchor host thrombospondin or a parasite analog in a binding complex with the endothelial cell receptor. The chain is Knob-associated histidine-rich protein (SD17) from Plasmodium falciparum (isolate NF7 / Ghana).